The following is a 303-amino-acid chain: Serine/threonine-protein phosphatase 6 catalytic subunit (303 aa).

Positions 51, 53, 79, and 111 each coordinate Mn(2+). His112 functions as the Proton donor in the catalytic mechanism. Mn(2+) contacts are provided by His161 and His235.

The protein belongs to the PPP phosphatase family. PP-6 (PP-V) subfamily. Requires Mn(2+) as cofactor.

It localises to the cytoplasm. It catalyses the reaction O-phospho-L-seryl-[protein] + H2O = L-seryl-[protein] + phosphate. The catalysed reaction is O-phospho-L-threonyl-[protein] + H2O = L-threonyl-[protein] + phosphate. May be involved in controlling cellularization or in regulating transcription of the genes involved in this process. This is Serine/threonine-protein phosphatase 6 catalytic subunit (PpV) from Drosophila melanogaster (Fruit fly).